A 411-amino-acid chain; its full sequence is Carbohydrate sulfotransferase 5 (411 aa).

Residues 1–30 are Cytoplasmic-facing; sequence MGMRARVPKVAHSTRRPPAARMWLPRFSSK. A helical; Signal-anchor for type II membrane protein transmembrane segment spans residues 31–48; it reads TVTVLLLAQTTCLLLFII. The Lumenal segment spans residues 49–411; the sequence is SRPGPSSPAG…PDHFSWASPD (363 aa). Residue 71–77 participates in 3'-phosphoadenylyl sulfate binding; the sequence is WRSGSSF. N138 carries an N-linked (GlcNAc...) asparagine glycan. 224–232 is a binding site for 3'-phosphoadenylyl sulfate; the sequence is RDPRAVLRS. N-linked (GlcNAc...) asparagine glycosylation is found at N327 and N350.

This sequence belongs to the sulfotransferase 1 family. Gal/GlcNAc/GalNAc subfamily. In terms of tissue distribution, predominantly expressed in small and large intestines and colon. Weakly expressed in lymphocytes. Not expressed in other tissues. Down-regulated in colonic adenocarcinomas.

It localises to the golgi apparatus membrane. Its function is as follows. Sulfotransferase that utilizes 3'-phospho-5'-adenylyl sulfate (PAPS) as sulfonate donor to catalyze the transfer of sulfate to position 6 of non-reducing N-acetylglucosamine (GlcNAc) residues and O-linked sugars of mucin-type acceptors. Acts on the non-reducing terminal GlcNAc of short carbohydrate substrates. However, it does not transfer sulfate to longer carbohydrate substrates that have poly-N-acetyllactosamine structures. Has no activity toward keratan. Not involved in generating HEV-expressed ligands for SELL. Its substrate specificity may be influenced by its subcellular location. The protein is Carbohydrate sulfotransferase 5 (CHST5) of Homo sapiens (Human).